The primary structure comprises 261 residues: 8-demethyl-8-(2,3-dimethoxy-alpha-L-rhamnosyl)-tetracenomycin-C 4'-O-methyltransferase (261 aa).

Residues 53–54 (TM), 81–85 (ETGVW), 111–115 (DSFEG), Phe167, 185–186 (DG), and Ser191 each bind S-adenosyl-L-methionine. Residue Asp185 participates in Mg(2+) binding. The Mg(2+) site is built by Asp212 and Asp213.

Belongs to the methyltransferase TylF/MycF family. Requires Mg(2+) as cofactor.

The catalysed reaction is 8-demethyl-8-(2,3-di-O-methyl-alpha-L-rhamnosyl)-tetracenomycin C + S-adenosyl-L-methionine = 8-demethyl-8-(2,3,4-tri-O-methyl-alpha-L-rhamnosyl)-tetracenomycin C + S-adenosyl-L-homocysteine + H(+). It participates in antibiotic biosynthesis. Functionally, O-methyltransferase involved in the biosynthesis of the permethylated L-rhamnose moiety of elloramycin, an antitumor polyketide. Mediates the methylation of the hydroxy groups at the 4'-position after the sugar moiety has been attached to the aglycon. This Streptomyces olivaceus protein is 8-demethyl-8-(2,3-dimethoxy-alpha-L-rhamnosyl)-tetracenomycin-C 4'-O-methyltransferase.